The primary structure comprises 478 residues: Sphingomyelin synthase-related protein 1 (478 aa).

The span at 1 to 22 shows a compositional bias: low complexity; that stretch reads MPAGSRAGSRLRSGSLPRPSRL. Positions 1–65 are disordered; that stretch reads MPAGSRAGSR…TAEEVEKEMA (65 aa). The SAM domain maps to 75–141; that stretch reads WTTKHVAVWL…MLSVRKLQKI (67 aa). Helical transmembrane passes span 216 to 236, 264 to 284, 295 to 315, 341 to 361, 385 to 405, and 410 to 430; these read ILSC…MVIV, FSMT…VLLL, LCSL…VTSL, AIWS…DYMF, FLHT…LAAH, and IDVF…HTLA. Over 431-478 the chain is Cytoplasmic; it reads NTRAYHQSRRARIWFPMFSFFECNVNGTVPNEYCWPFSKPAIMKRLIG.

This sequence belongs to the sphingomyelin synthase family. In terms of tissue distribution, expressed ubiquitously with highest levels in macrophages and testis.

Its subcellular location is the endoplasmic reticulum membrane. It catalyses the reaction an N-acylsphing-4-enine + a 1,2-diacyl-sn-glycero-3-phosphoethanolamine = an N-acylsphing-4-enine 1-phosphoethanolamine + a 1,2-diacyl-sn-glycerol. It carries out the reaction an N-acylsphinganine + a 1,2-diacyl-sn-glycero-3-phosphoethanolamine = an N-acylsphinganine-1-phosphoethanolamine + a 1,2-diacyl-sn-glycerol. The enzyme catalyses an N-acyl-(4R)-4-hydroxysphinganine + a 1,2-diacyl-sn-glycero-3-phosphoethanolamine = an N-acyl-(4R)-4-hydroxysphinganine-1-phosphoethanolamine + a 1,2-diacyl-sn-glycerol. The catalysed reaction is N-hexadecanoylsphinganine + a 1,2-diacyl-sn-glycero-3-phosphoethanolamine = N-hexadecanoyl-sphinganine-1-phosphoethanolamine + a 1,2-diacyl-sn-glycerol. It catalyses the reaction N-hexadecanoyl-(4R)-hydroxysphinganine + a 1,2-diacyl-sn-glycero-3-phosphoethanolamine = N-hexadecanoyl-(4R)-hydroxysphinganine-1-phosphoethanolamine + a 1,2-diacyl-sn-glycerol. It functions in the pathway sphingolipid metabolism. Functionally, synthesizes sphingolipids through transfer of a phosphatidyl head group from a glycerophospholipid on to the primary hydroxyl of a ceramide in the lumen of the endoplasmic reticulum. Catalyzes the synthesis of ceramide phosphoethanolamines (CPEs) (such as N-acylsphing-4-enine 1-phosphoethanolamine) by transferring phosphoethanolamine head group, which is smaller and more hydrophilic than the phosphocholine (PC) headgroup transferred in the canonical sphingomyelin synthesis (SMS) reaction by SMS1 or SMS2, from a phosphatidylethanolamine (1,2-diacyl-sn-glycero-3-phosphoethanolamine, PE) to a ceramide (such as N-acylsphing-4-enine). The larger PC prevents an efficient fit in the enzyme's catalytic pocket, leading to little or no SMS activity. In vitro, in the absence of ceramide, it has PLC activity with preference for phosphatidylinositol and phosphatidic acid, but also hydrolyzes phosphatidylethanolamine. This chain is Sphingomyelin synthase-related protein 1, found in Mus musculus (Mouse).